Here is a 362-residue protein sequence, read N- to C-terminus: MPTFPQSFPMNGGDGPHSYIHNSSYQKVAIDGVKERTSEAILEKLDLEFLNRNSEENILRIVDFGCSIGPNTFDVVQNIIDTVKQKRLKENKTYIGAPLEFQVCFNDQPNNDFNTLFRTQPFFSRKEYFSVGVPGSFHGRVLPKNSLHIGHTSYTLHWLSNVPQHVCDKKSPALNKSYIQCNNLVDEVTKAYKIQFRKDFGGFLEARAEELVSGGLMILSGQCLPDGIPKALTWQGVVIDMIGDCLMDLAKLGITSKEKIELFSLPTYIPHISEFKANIEQNENFNVETMEEISHPMDYMPLTNDFITSMFRAILNTIIEEHFGEGVVNELFSRLAKRLDKYPIDFKRCKKYVNYFIVLKRK.

Residues Tyr-19, Cys-66, Asn-71, Asp-107, Ser-136, and Phe-137 each coordinate S-adenosyl-L-homocysteine. Mg(2+) contacts are provided by Asn-175, Glu-261, and Phe-263.

Belongs to the methyltransferase superfamily. Type-7 methyltransferase family. In terms of assembly, homodimer. The cofactor is Mg(2+).

The protein is Probable S-adenosylmethionine-dependent methyltransferase At5g37970 of Arabidopsis thaliana (Mouse-ear cress).